We begin with the raw amino-acid sequence, 405 residues long: Adenylosuccinate synthetase (405 aa).

GTP is bound by residues 12–18 and 40–42; these read GDEGKGK and GHT. Catalysis depends on D13, which acts as the Proton acceptor. 2 residues coordinate Mg(2+): D13 and G40. IMP-binding positions include 13–16, 38–41, T121, R135, Q213, T228, and R297; these read DEGK and NAGH. H41 acts as the Proton donor in catalysis. 293–299 lines the substrate pocket; it reads TTTGRPR. GTP contacts are provided by residues R299, 325–327, and 390–392; these read KMD and SAG.

The protein belongs to the adenylosuccinate synthetase family. Homodimer. Mg(2+) is required as a cofactor.

It is found in the cytoplasm. It catalyses the reaction IMP + L-aspartate + GTP = N(6)-(1,2-dicarboxyethyl)-AMP + GDP + phosphate + 2 H(+). The protein operates within purine metabolism; AMP biosynthesis via de novo pathway; AMP from IMP: step 1/2. In terms of biological role, plays an important role in the de novo pathway of purine nucleotide biosynthesis. Catalyzes the first committed step in the biosynthesis of AMP from IMP. The chain is Adenylosuccinate synthetase from Deinococcus radiodurans (strain ATCC 13939 / DSM 20539 / JCM 16871 / CCUG 27074 / LMG 4051 / NBRC 15346 / NCIMB 9279 / VKM B-1422 / R1).